A 147-amino-acid polypeptide reads, in one-letter code: DNA base-flipping protein (147 aa).

It belongs to the MGMT family. ATL subfamily. As to quaternary structure, interacts with several proteins, including UvrA, UvrD and the three subunits of the RNA polymerase.

Involved in DNA damage recognition. Binds DNA containing O(6)-methylguanine and larger O(6)-alkylguanine adducts. Binds to the damaged base and flips the base out of the DNA duplex into an extrahelical conformation, which allows processing by repair proteins. Also affects the regulation of gene expression in response to alkylation. In Thermus thermophilus (strain ATCC 27634 / DSM 579 / HB8), this protein is DNA base-flipping protein.